The chain runs to 176 residues: Non-specific lipid transfer protein GPI-anchored 12 (176 aa).

The N-terminal stretch at 1 to 20 is a signal peptide; that stretch reads MLTTNTLAVLLLLFLSLCSG. Cystine bridges form between Cys-40/Cys-83, Cys-50/Cys-67, Cys-68/Cys-110, and Cys-81/Cys-120. An N-linked (GlcNAc...) asparagine glycan is attached at Asn-46. Asn-149 carries the GPI-anchor amidated asparagine lipid modification. A propeptide spans 150 to 176 (removed in mature form); sequence GAMTTKYCGVALNSLALLLLFTFLSLS.

Belongs to the plant LTP family. Preferentially expressed in the endodermis of hypocotyls and roots of seedlings, and in petals and anthers of inflorescences. May also be expressed in siliques, carpels and pedicels.

Its subcellular location is the cell membrane. Its function is as follows. Probable lipid transfer protein. The sequence is that of Non-specific lipid transfer protein GPI-anchored 12 from Arabidopsis thaliana (Mouse-ear cress).